A 341-amino-acid chain; its full sequence is S-adenosylmethionine:tRNA ribosyltransferase-isomerase (341 aa).

It belongs to the QueA family. In terms of assembly, monomer.

Its subcellular location is the cytoplasm. It catalyses the reaction 7-aminomethyl-7-carbaguanosine(34) in tRNA + S-adenosyl-L-methionine = epoxyqueuosine(34) in tRNA + adenine + L-methionine + 2 H(+). It functions in the pathway tRNA modification; tRNA-queuosine biosynthesis. Functionally, transfers and isomerizes the ribose moiety from AdoMet to the 7-aminomethyl group of 7-deazaguanine (preQ1-tRNA) to give epoxyqueuosine (oQ-tRNA). The polypeptide is S-adenosylmethionine:tRNA ribosyltransferase-isomerase (Clostridioides difficile (strain 630) (Peptoclostridium difficile)).